Here is a 422-residue protein sequence, read N- to C-terminus: Keratan-sulfate endo-1,4-beta-galactosidase (422 aa).

The signal sequence occupies residues 1–46; sequence MRKTKFWLVLSLIATSLSIFACKKDSTATKNPIPEVSKAKASTKLL. Residues 47–292 enclose the GH16 domain; the sequence is NATTVATTDY…YVRVYKLPLF (246 aa). The active-site Nucleophile is the Glu171. Glu176 functions as the Proton donor in the catalytic mechanism. The 116-residue stretch at 291-406 folds into the CBM-cenC domain; sequence LFSNGDFESG…NTTATVYFYK (116 aa).

This sequence belongs to the glycosyl hydrolase 16 family.

The protein resides in the secreted. It carries out the reaction Endohydrolysis of (1-&gt;4)-beta-D-galactosidic linkages in keratan sulfate.. Hydrolyzes internal endo-beta-galactosyl linkages in keratan sulfate and in various neolacto-type glycosphingolipids, producing sulfated and non-sulfated disaccharides, and glucosylceramides respectivly. The polypeptide is Keratan-sulfate endo-1,4-beta-galactosidase (Sphingobacterium multivorum).